A 291-amino-acid polypeptide reads, in one-letter code: Nucleotide-binding protein jk1004 (291 aa).

Glycine 16 to arginine 23 provides a ligand contact to ATP. Aspartate 67–serine 70 is a GTP binding site.

It belongs to the RapZ-like family.

Functionally, displays ATPase and GTPase activities. This chain is Nucleotide-binding protein jk1004, found in Corynebacterium jeikeium (strain K411).